Reading from the N-terminus, the 427-residue chain is Enolase (427 aa).

Q163 serves as a coordination point for (2R)-2-phosphoglycerate. The active-site Proton donor is the E205. Mg(2+) is bound by residues D242, E285, and D312. (2R)-2-phosphoglycerate is bound by residues K337, R366, S367, and K388. The active-site Proton acceptor is K337.

The protein belongs to the enolase family. Mg(2+) is required as a cofactor.

Its subcellular location is the cytoplasm. It localises to the secreted. The protein resides in the cell surface. The enzyme catalyses (2R)-2-phosphoglycerate = phosphoenolpyruvate + H2O. It participates in carbohydrate degradation; glycolysis; pyruvate from D-glyceraldehyde 3-phosphate: step 4/5. Functionally, catalyzes the reversible conversion of 2-phosphoglycerate (2-PG) into phosphoenolpyruvate (PEP). It is essential for the degradation of carbohydrates via glycolysis. The polypeptide is Enolase (Herminiimonas arsenicoxydans).